A 635-amino-acid chain; its full sequence is Threonine--tRNA ligase (635 aa).

One can recognise a TGS domain in the interval 1 to 58 (MIQVTCDQKNYEVLEGTTAAELAKQLKNSHQFIGVLINERPRDLSTHLNEGDTLVFLT). The catalytic stretch occupies residues 237–528 (DHRVLGAKLD…LIENFKGRFP (292 aa)). Residues cysteine 328, histidine 379, and histidine 505 each contribute to the Zn(2+) site.

The protein belongs to the class-II aminoacyl-tRNA synthetase family. As to quaternary structure, homodimer. The cofactor is Zn(2+).

It is found in the cytoplasm. The enzyme catalyses tRNA(Thr) + L-threonine + ATP = L-threonyl-tRNA(Thr) + AMP + diphosphate + H(+). Catalyzes the attachment of threonine to tRNA(Thr) in a two-step reaction: L-threonine is first activated by ATP to form Thr-AMP and then transferred to the acceptor end of tRNA(Thr). Also edits incorrectly charged L-seryl-tRNA(Thr). The polypeptide is Threonine--tRNA ligase (Chlamydia pneumoniae (Chlamydophila pneumoniae)).